A 117-amino-acid chain; its full sequence is Large ribosomal subunit protein uL18 (117 aa).

This sequence belongs to the universal ribosomal protein uL18 family. Part of the 50S ribosomal subunit; part of the 5S rRNA/L5/L18/L25 subcomplex. Contacts the 5S and 23S rRNAs.

In terms of biological role, this is one of the proteins that bind and probably mediate the attachment of the 5S RNA into the large ribosomal subunit, where it forms part of the central protuberance. In Pasteurella multocida (strain Pm70), this protein is Large ribosomal subunit protein uL18.